Here is a 475-residue protein sequence, read N- to C-terminus: Probable UDP-N-acetylglucosamine pyrophosphorylase (475 aa).

The Substrate binding motif lies at 103-106 (LAGG). Residues 103–106 (LAGG), K117, Q194, and G220 each bind UTP. N221 contributes to the substrate binding site. D251 serves as a coordination point for UTP. The Substrate binding signature appears at 301-302 (EY). K378 contributes to the UTP binding site. S405 is modified (phosphoserine). K410 provides a ligand contact to substrate.

This sequence belongs to the UDPGP type 1 family.

The protein localises to the cytoplasm. It is found in the nucleus. The enzyme catalyses N-acetyl-alpha-D-glucosamine 1-phosphate + UTP + H(+) = UDP-N-acetyl-alpha-D-glucosamine + diphosphate. It functions in the pathway nucleotide-sugar biosynthesis; UDP-N-acetyl-alpha-D-glucosamine biosynthesis; UDP-N-acetyl-alpha-D-glucosamine from N-acetyl-alpha-D-glucosamine 1-phosphate: step 1/1. The chain is Probable UDP-N-acetylglucosamine pyrophosphorylase (uap1) from Schizosaccharomyces pombe (strain 972 / ATCC 24843) (Fission yeast).